The primary structure comprises 388 residues: ATP phosphoribosyltransferase regulatory subunit (388 aa).

The protein belongs to the class-II aminoacyl-tRNA synthetase family. HisZ subfamily. Heteromultimer composed of HisG and HisZ subunits.

The protein localises to the cytoplasm. Its pathway is amino-acid biosynthesis; L-histidine biosynthesis; L-histidine from 5-phospho-alpha-D-ribose 1-diphosphate: step 1/9. Its function is as follows. Required for the first step of histidine biosynthesis. May allow the feedback regulation of ATP phosphoribosyltransferase activity by histidine. This chain is ATP phosphoribosyltransferase regulatory subunit, found in Acinetobacter baumannii (strain AB307-0294).